Here is a 474-residue protein sequence, read N- to C-terminus: mRNA cap guanine-N(7) methyltransferase (474 aa).

The span at methionine 1–proline 12 shows a compositional bias: polar residues. A disordered region spans residues methionine 1 to aspartate 106. The segment covering serine 56–glycine 100 has biased composition (basic and acidic residues). An mRNA cap 0 methyltransferase domain is found at serine 170–valine 474. Asparagine 179 to asparagine 180 provides a ligand contact to mRNA. S-adenosyl-L-methionine-binding residues include lysine 183, cysteine 207, aspartate 229, aspartate 269, glutamine 299, and tyrosine 304.

It belongs to the class I-like SAM-binding methyltransferase superfamily. mRNA cap 0 methyltransferase family.

The protein resides in the nucleus. The enzyme catalyses a 5'-end (5'-triphosphoguanosine)-ribonucleoside in mRNA + S-adenosyl-L-methionine = a 5'-end (N(7)-methyl 5'-triphosphoguanosine)-ribonucleoside in mRNA + S-adenosyl-L-homocysteine. Functionally, responsible for methylating the 5'-cap structure of mRNAs. This chain is mRNA cap guanine-N(7) methyltransferase (ABD1), found in Candida albicans (strain SC5314 / ATCC MYA-2876) (Yeast).